Reading from the N-terminus, the 140-residue chain is Arsenate-mycothiol transferase ArsC1 (140 aa).

The protein belongs to the low molecular weight phosphotyrosine protein phosphatase family.

It is found in the cytoplasm. It catalyses the reaction mycothiol + arsenate = arseno-mycothiol + H2O. Functionally, involved in defense against toxic arsenate. Involved in the mycothiol/myoredoxin redox pathway which uses a mycothioltransferase mechanism; facilitates adduct formation between arsenate and mycothiol. In Corynebacterium glutamicum (strain ATCC 13032 / K051), this protein is Arsenate-mycothiol transferase ArsC1 (arsC1).